A 116-amino-acid polypeptide reads, in one-letter code: Aspartate 1-decarboxylase (116 aa).

Ser-25 serves as the catalytic Schiff-base intermediate with substrate; via pyruvic acid. Residue Ser-25 is modified to Pyruvic acid (Ser). Thr-57 serves as a coordination point for substrate. The Proton donor role is filled by Tyr-58. 73–75 is a substrate binding site; it reads GAA.

It belongs to the PanD family. In terms of assembly, heterooctamer of four alpha and four beta subunits. Requires pyruvate as cofactor. In terms of processing, is synthesized initially as an inactive proenzyme, which is activated by self-cleavage at a specific serine bond to produce a beta-subunit with a hydroxyl group at its C-terminus and an alpha-subunit with a pyruvoyl group at its N-terminus.

The protein localises to the cytoplasm. The catalysed reaction is L-aspartate + H(+) = beta-alanine + CO2. It functions in the pathway cofactor biosynthesis; (R)-pantothenate biosynthesis; beta-alanine from L-aspartate: step 1/1. Functionally, catalyzes the pyruvoyl-dependent decarboxylation of aspartate to produce beta-alanine. This is Aspartate 1-decarboxylase from Parabacteroides distasonis (strain ATCC 8503 / DSM 20701 / CIP 104284 / JCM 5825 / NCTC 11152).